The primary structure comprises 396 residues: Cysteine protease ATG4A (396 aa).

Residue Cys77 is the Nucleophile of the active site. Catalysis depends on residues Asp276 and His278. The LIR signature appears at 390–393 (FEIL).

This sequence belongs to the peptidase C54 family. In terms of assembly, interacts with ATG9A; the interaction is direct.

It is found in the cytoplasm. The catalysed reaction is [protein]-C-terminal L-amino acid-glycyl-phosphatidylethanolamide + H2O = [protein]-C-terminal L-amino acid-glycine + a 1,2-diacyl-sn-glycero-3-phosphoethanolamine. Inhibited by N-ethylmaleimide. Redox-regulated during autophagy since reducing conditions activate ATG4A whereas an oxidizing environment such as the presence of H(2)O(2) inhibits its activity. Cysteine protease that plays a key role in autophagy by mediating both proteolytic activation and delipidation of ATG8 family proteins. The protease activity is required for proteolytic activation of ATG8 family proteins: cleaves the C-terminal amino acid of ATG8 proteins to reveal a C-terminal glycine. Exposure of the glycine at the C-terminus is essential for ATG8 proteins conjugation to phosphatidylethanolamine (PE) and insertion to membranes, which is necessary for autophagy. Preferred substrate is GABARAPL2 followed by MAP1LC3A and GABARAP. Protease activity is also required to counteract formation of high-molecular weight conjugates of ATG8 proteins (ATG8ylation): acts as a deubiquitinating-like enzyme that removes ATG8 conjugated to other proteins, such as ATG3. In addition to the protease activity, also mediates delipidation of ATG8 family proteins. Catalyzes delipidation of PE-conjugated forms of ATG8 proteins during macroautophagy. Compared to ATG4B, the major protein for proteolytic activation of ATG8 proteins, shows weaker ability to cleave the C-terminal amino acid of ATG8 proteins, while it displays stronger delipidation activity. Involved in phagophore growth during mitophagy independently of its protease activity and of ATG8 proteins: acts by regulating ATG9A trafficking to mitochondria and promoting phagophore-endoplasmic reticulum contacts during the lipid transfer phase of mitophagy. The chain is Cysteine protease ATG4A from Mus musculus (Mouse).